Consider the following 65-residue polypeptide: Large ribosomal subunit protein bL33c (65 aa).

The protein belongs to the bacterial ribosomal protein bL33 family.

It is found in the plastid. The protein resides in the chloroplast. This Staurastrum punctulatum (Green alga) protein is Large ribosomal subunit protein bL33c.